A 65-amino-acid polypeptide reads, in one-letter code: uncharacterized protein (65 aa).

It localises to the plastid. It is found in the chloroplast. This is an uncharacterized protein from Mesostigma viride (Green alga).